The primary structure comprises 258 residues: Malonyl-[acyl-carrier protein] O-methyltransferase (258 aa).

It belongs to the methyltransferase superfamily.

It carries out the reaction malonyl-[ACP] + S-adenosyl-L-methionine = malonyl-[ACP] methyl ester + S-adenosyl-L-homocysteine. It functions in the pathway cofactor biosynthesis; biotin biosynthesis. Converts the free carboxyl group of a malonyl-thioester to its methyl ester by transfer of a methyl group from S-adenosyl-L-methionine (SAM). It allows to synthesize pimeloyl-ACP via the fatty acid synthetic pathway. This chain is Malonyl-[acyl-carrier protein] O-methyltransferase, found in Hamiltonella defensa subsp. Acyrthosiphon pisum (strain 5AT).